Reading from the N-terminus, the 234-residue chain is Phosphoribosylaminoimidazole-succinocarboxamide synthase (234 aa).

Belongs to the SAICAR synthetase family.

The enzyme catalyses 5-amino-1-(5-phospho-D-ribosyl)imidazole-4-carboxylate + L-aspartate + ATP = (2S)-2-[5-amino-1-(5-phospho-beta-D-ribosyl)imidazole-4-carboxamido]succinate + ADP + phosphate + 2 H(+). The protein operates within purine metabolism; IMP biosynthesis via de novo pathway; 5-amino-1-(5-phospho-D-ribosyl)imidazole-4-carboxamide from 5-amino-1-(5-phospho-D-ribosyl)imidazole-4-carboxylate: step 1/2. In Streptococcus pyogenes serotype M3 (strain ATCC BAA-595 / MGAS315), this protein is Phosphoribosylaminoimidazole-succinocarboxamide synthase.